The sequence spans 96 residues: Co-chaperonin GroES (96 aa).

Belongs to the GroES chaperonin family. In terms of assembly, heptamer of 7 subunits arranged in a ring. Interacts with the chaperonin GroEL.

The protein localises to the cytoplasm. In terms of biological role, together with the chaperonin GroEL, plays an essential role in assisting protein folding. The GroEL-GroES system forms a nano-cage that allows encapsulation of the non-native substrate proteins and provides a physical environment optimized to promote and accelerate protein folding. GroES binds to the apical surface of the GroEL ring, thereby capping the opening of the GroEL channel. In Caulobacter sp. (strain K31), this protein is Co-chaperonin GroES.